The primary structure comprises 77 residues: Acyl carrier protein (77 aa).

Residues 1 to 76 enclose the Carrier domain; it reads MATFDDVKAV…DVVNYIDNLK (76 aa). Serine 36 carries the O-(pantetheine 4'-phosphoryl)serine modification.

This sequence belongs to the acyl carrier protein (ACP) family. In terms of processing, 4'-phosphopantetheine is transferred from CoA to a specific serine of apo-ACP by AcpS. This modification is essential for activity because fatty acids are bound in thioester linkage to the sulfhydryl of the prosthetic group.

It is found in the cytoplasm. It participates in lipid metabolism; fatty acid biosynthesis. Its function is as follows. Carrier of the growing fatty acid chain in fatty acid biosynthesis. The protein is Acyl carrier protein of Campylobacter jejuni subsp. jejuni serotype O:6 (strain 81116 / NCTC 11828).